A 591-amino-acid polypeptide reads, in one-letter code: L-fucose isomerase (591 aa).

Residues glutamate 337 and aspartate 361 each act as proton acceptor in the active site. Mn(2+) contacts are provided by glutamate 337, aspartate 361, and histidine 528.

It belongs to the L-fucose isomerase family. In terms of assembly, homohexamer. Requires Mn(2+) as cofactor.

It is found in the cytoplasm. The enzyme catalyses L-fucose = L-fuculose. It participates in carbohydrate degradation; L-fucose degradation; L-lactaldehyde and glycerone phosphate from L-fucose: step 1/3. Its function is as follows. Converts the aldose L-fucose into the corresponding ketose L-fuculose. This chain is L-fucose isomerase, found in Klebsiella pneumoniae (strain 342).